The primary structure comprises 222 residues: MEEWYGQVAPREKLLKYGAAVLTDAELLAIFLRTGIPGMHVMQMAEYLIEEFGSLYGLISADYQALCAQKGIGVSKYSQIQAIAELAGRCFSSHLMQESVLQNPEITQKFLQNILSHREREIFLVMFLDNQHRVIRHEEMFTGTISSVEIHPREIVREALKVNAAALILAHNHPSGKAEPSQADRLMTTQVIKACSLLDIRVLDHLVVGRGECVSFAERGWL.

Residues 100 to 222 (VLQNPEITQK…CVSFAERGWL (123 aa)) form the MPN domain. 3 residues coordinate Zn(2+): histidine 171, histidine 173, and aspartate 184. The JAMM motif motif lies at 171–184 (HNHPSGKAEPSQAD).

The protein belongs to the UPF0758 family. YicR subfamily.

The sequence is that of UPF0758 protein YE0063 from Yersinia enterocolitica serotype O:8 / biotype 1B (strain NCTC 13174 / 8081).